The chain runs to 201 residues: Transmembrane 4 L6 family member 18 (201 aa).

The Cytoplasmic segment spans residues 1-9 (MGSRKCGSC). A helical membrane pass occupies residues 10-30 (LSSLLIPLALWSIIVNILLYF). Residues 31–49 (PNGQASYASSNKLTNYVWY) are Extracellular-facing. A helical transmembrane segment spans residues 50-70 (FEGICFSGIMMLVVAAVLLVL). Residues 71–93 (ENDNNYKCCQSENCSKKYMTVLS) are Cytoplasmic-facing. Residues 94-114 (MIFSALGIAFSGYCLVISALG) form a helical membrane-spanning segment. The Extracellular portion of the chain corresponds to 115-157 (LLQGPYCRTLDGWEYAFEGTAGRFLTDSREWIQCLEPAHVVEW). The helical transmembrane segment at 158-178 (NIILFSILIALSGLQVIVCLI) threads the bilayer. Over 179 to 201 (RVVIQLSKSLCGTYSVIIQPGII) the chain is Cytoplasmic.

Belongs to the L6 tetraspanin family.

The protein resides in the membrane. The polypeptide is Transmembrane 4 L6 family member 18 (TM4SF18) (Bos taurus (Bovine)).